A 641-amino-acid chain; its full sequence is tRNA 5-methylaminomethyl-2-thiouridine biosynthesis bifunctional protein MnmC (641 aa).

The tract at residues 1-219 is tRNA (mnm(5)s(2)U34)-methyltransferase; sequence MTVSKILKQI…PYPICSAAVT (219 aa). The tract at residues 232–641 is FAD-dependent cmnm(5)s(2)U34 oxidoreductase; the sequence is IGGGVASACL…GKALEVGVEV (410 aa).

This sequence in the N-terminal section; belongs to the methyltransferase superfamily. tRNA (mnm(5)s(2)U34)-methyltransferase family. It in the C-terminal section; belongs to the DAO family. FAD serves as cofactor.

It is found in the cytoplasm. The enzyme catalyses 5-aminomethyl-2-thiouridine(34) in tRNA + S-adenosyl-L-methionine = 5-methylaminomethyl-2-thiouridine(34) in tRNA + S-adenosyl-L-homocysteine + H(+). Catalyzes the last two steps in the biosynthesis of 5-methylaminomethyl-2-thiouridine (mnm(5)s(2)U) at the wobble position (U34) in tRNA. Catalyzes the FAD-dependent demodification of cmnm(5)s(2)U34 to nm(5)s(2)U34, followed by the transfer of a methyl group from S-adenosyl-L-methionine to nm(5)s(2)U34, to form mnm(5)s(2)U34. This chain is tRNA 5-methylaminomethyl-2-thiouridine biosynthesis bifunctional protein MnmC, found in Shewanella pealeana (strain ATCC 700345 / ANG-SQ1).